Here is a 325-residue protein sequence, read N- to C-terminus: MALRRVLLFVKPFDVYPPRPLAAAASSPPPPPPPLRVSNPKVLNYLDDRCRVHKETINLCKSVLQRKSIDWISVQRNDMSNPIHDVDLVISVGGDGTLLRASHFLNSSIPVLGVNSDPTCPDEVDELTDEFDARRSTGHLCAATAANFEQILDATLDGSRQPSELSRISVKLNGLQLPTYALNDILVSHPCPASVSRFSFRKRSNTGESSHLINCRSSGLRVATPAGSTAAMLSAGGFVMPISSHELQYMIREPISPRDADKPLLHGLVKQGQHILVVWYNEEGAVYFDGSHVMHSIQHGDTLEISSDAPILKVILPENLLKQGS.

The protein belongs to the NAD kinase family. As to quaternary structure, homodimer.

It localises to the cytoplasm. The enzyme catalyses NADH + ATP = ADP + NADPH + H(+). Key source of the cellular reductant NADPH which is an important antioxidant factor. This is Probable NADH kinase from Oryza sativa subsp. japonica (Rice).